Here is a 384-residue protein sequence, read N- to C-terminus: Ribonucleoside-diphosphate reductase small chain (384 aa).

Asp130, Glu161, and His164 together coordinate Fe cation. The active site involves Tyr168. Glu224, Glu258, and His261 together coordinate Fe cation.

This sequence belongs to the ribonucleoside diphosphate reductase small chain family. As to quaternary structure, heterodimer of a large and a small subunit. It depends on Fe cation as a cofactor.

The enzyme catalyses a 2'-deoxyribonucleoside 5'-diphosphate + [thioredoxin]-disulfide + H2O = a ribonucleoside 5'-diphosphate + [thioredoxin]-dithiol. Functionally, provides the precursors necessary for DNA synthesis. Catalyzes the biosynthesis of deoxyribonucleotides from the corresponding ribonucleotides. The sequence is that of Ribonucleoside-diphosphate reductase small chain from Spisula solidissima (Atlantic surf-clam).